Consider the following 57-residue polypeptide: MKSQKIHNQKDREKVEIYFYLKILINISTIHVITDYYFYLCQRWLARGCCEVTSKRF.

This is an uncharacterized protein from Saccharomyces cerevisiae (strain ATCC 204508 / S288c) (Baker's yeast).